We begin with the raw amino-acid sequence, 389 residues long: Methylthioribose-1-phosphate isomerase (389 aa).

The active-site Proton donor is Asp258.

This sequence belongs to the eIF-2B alpha/beta/delta subunits family. MtnA subfamily.

It localises to the cytoplasm. The protein resides in the nucleus. It catalyses the reaction 5-(methylsulfanyl)-alpha-D-ribose 1-phosphate = 5-(methylsulfanyl)-D-ribulose 1-phosphate. It functions in the pathway amino-acid biosynthesis; L-methionine biosynthesis via salvage pathway; L-methionine from S-methyl-5-thio-alpha-D-ribose 1-phosphate: step 1/6. Functionally, catalyzes the interconversion of methylthioribose-1-phosphate (MTR-1-P) into methylthioribulose-1-phosphate (MTRu-1-P). The polypeptide is Methylthioribose-1-phosphate isomerase (Chaetomium globosum (strain ATCC 6205 / CBS 148.51 / DSM 1962 / NBRC 6347 / NRRL 1970) (Soil fungus)).